We begin with the raw amino-acid sequence, 107 residues long: SH3 domain-binding glutamic acid-rich-like protein 2 (107 aa).

The short motif at 61–67 (QGNPLPP) is the SH3-binding element.

This sequence belongs to the SH3BGR family. In terms of tissue distribution, highly expressed in brain, placenta, liver and kidney. Expressed in retina.

It localises to the nucleus. This is SH3 domain-binding glutamic acid-rich-like protein 2 (SH3BGRL2) from Homo sapiens (Human).